We begin with the raw amino-acid sequence, 272 residues long: Dermonecrotic toxin StSicTox-betaIF1 (272 aa).

The active site involves histidine 5. Mg(2+)-binding residues include glutamate 25 and aspartate 27. Catalysis depends on histidine 41, which acts as the Nucleophile. 2 disulfide bridges follow: cysteine 45/cysteine 51 and cysteine 47/cysteine 189. Aspartate 85 contacts Mg(2+).

It belongs to the arthropod phospholipase D family. Class II subfamily. Requires Mg(2+) as cofactor. In terms of tissue distribution, expressed by the venom gland.

It is found in the secreted. The enzyme catalyses an N-(acyl)-sphingosylphosphocholine = an N-(acyl)-sphingosyl-1,3-cyclic phosphate + choline. It carries out the reaction an N-(acyl)-sphingosylphosphoethanolamine = an N-(acyl)-sphingosyl-1,3-cyclic phosphate + ethanolamine. The catalysed reaction is a 1-acyl-sn-glycero-3-phosphocholine = a 1-acyl-sn-glycero-2,3-cyclic phosphate + choline. It catalyses the reaction a 1-acyl-sn-glycero-3-phosphoethanolamine = a 1-acyl-sn-glycero-2,3-cyclic phosphate + ethanolamine. Dermonecrotic toxins cleave the phosphodiester linkage between the phosphate and headgroup of certain phospholipids (sphingolipid and lysolipid substrates), forming an alcohol (often choline) and a cyclic phosphate. This toxin acts on sphingomyelin (SM). It may also act on ceramide phosphoethanolamine (CPE), lysophosphatidylcholine (LPC) and lysophosphatidylethanolamine (LPE), but not on lysophosphatidylserine (LPS), and lysophosphatidylglycerol (LPG). It acts by transphosphatidylation, releasing exclusively cyclic phosphate products as second products. Induces dermonecrosis, hemolysis, increased vascular permeability, edema, inflammatory response, and platelet aggregation. In Sicarius terrosus (Cave spider), this protein is Dermonecrotic toxin StSicTox-betaIF1.